The following is a 131-amino-acid chain: Small ribosomal subunit protein uS8 (131 aa).

This sequence belongs to the universal ribosomal protein uS8 family. In terms of assembly, part of the 30S ribosomal subunit. Contacts proteins S5 and S12.

In terms of biological role, one of the primary rRNA binding proteins, it binds directly to 16S rRNA central domain where it helps coordinate assembly of the platform of the 30S subunit. In Cupriavidus metallidurans (strain ATCC 43123 / DSM 2839 / NBRC 102507 / CH34) (Ralstonia metallidurans), this protein is Small ribosomal subunit protein uS8.